The following is a 163-amino-acid chain: Nucleotide-binding protein CJE0423 (163 aa).

It belongs to the YajQ family.

In terms of biological role, nucleotide-binding protein. The chain is Nucleotide-binding protein CJE0423 from Campylobacter jejuni (strain RM1221).